A 584-amino-acid polypeptide reads, in one-letter code: Alkaline nuclease (584 aa).

The tract at residues 409–429 is disordered; that stretch reads GGGADHHLRGSPGDSPPPIPF.

The protein belongs to the herpesviridae alkaline nuclease family. As to quaternary structure, interacts with major DNA-binding protein; this interaction increases the nuclease processivity of the alkaline exonuclease.

It is found in the host nucleus. It localises to the host cytoplasm. Plays a role in processing non linear or branched viral DNA intermediates in order to promote the production of mature packaged unit-length linear progeny viral DNA molecules. Exhibits endonuclease and exonuclease activities and accepts both double-stranded and single-stranded DNA as substrate. Exonuclease digestion of DNA is in the 5'-&gt; 3' direction and the products are 5'-monophosphate nucleosides. Additionally, forms a recombinase with the major DNA-binding protein, which displays strand exchange activity. This is Alkaline nuclease (UL98) from Homo sapiens (Human).